We begin with the raw amino-acid sequence, 143 residues long: Transcriptional regulator MraZ (143 aa).

SpoVT-AbrB domains are found at residues 5–47 (EYQH…PQDE) and 76–119 (AAEL…STEK).

Belongs to the MraZ family. In terms of assembly, forms oligomers.

The protein localises to the cytoplasm. It localises to the nucleoid. In Syntrophomonas wolfei subsp. wolfei (strain DSM 2245B / Goettingen), this protein is Transcriptional regulator MraZ.